The primary structure comprises 285 residues: Bifunctional protein FolD (285 aa).

NADP(+)-binding positions include 165 to 167 (GRS) and Ser190.

This sequence belongs to the tetrahydrofolate dehydrogenase/cyclohydrolase family. Homodimer.

The catalysed reaction is (6R)-5,10-methylene-5,6,7,8-tetrahydrofolate + NADP(+) = (6R)-5,10-methenyltetrahydrofolate + NADPH. It catalyses the reaction (6R)-5,10-methenyltetrahydrofolate + H2O = (6R)-10-formyltetrahydrofolate + H(+). The protein operates within one-carbon metabolism; tetrahydrofolate interconversion. Functionally, catalyzes the oxidation of 5,10-methylenetetrahydrofolate to 5,10-methenyltetrahydrofolate and then the hydrolysis of 5,10-methenyltetrahydrofolate to 10-formyltetrahydrofolate. This Burkholderia pseudomallei (strain 1710b) protein is Bifunctional protein FolD.